Reading from the N-terminus, the 241-residue chain is Probable transcriptional regulatory protein RSc2190 (241 aa).

It belongs to the TACO1 family.

The protein resides in the cytoplasm. In Ralstonia nicotianae (strain ATCC BAA-1114 / GMI1000) (Ralstonia solanacearum), this protein is Probable transcriptional regulatory protein RSc2190.